Consider the following 202-residue polypeptide: MMRTGEIHRVTGETDVQVRLNLDGSGQCQASTGVAFLDHMLQQISSHGLIDLEISARGDTHIDDHHTNEDVGIAVGQALAQALGDRRGIHRFGHFLAPLDEALVQVALDCSGRPHLSYSLSIPSQKIGTYDTELVKEFFVAVVNNSGLTLHIRQLDGANSHHIVEACFKAFARALRQATEIDPRRADAVPSSKGVLEQAGMN.

This sequence belongs to the imidazoleglycerol-phosphate dehydratase family.

The protein resides in the cytoplasm. It catalyses the reaction D-erythro-1-(imidazol-4-yl)glycerol 3-phosphate = 3-(imidazol-4-yl)-2-oxopropyl phosphate + H2O. It participates in amino-acid biosynthesis; L-histidine biosynthesis; L-histidine from 5-phospho-alpha-D-ribose 1-diphosphate: step 6/9. This chain is Imidazoleglycerol-phosphate dehydratase, found in Synechococcus sp. (strain WH7803).